Here is a 286-residue protein sequence, read N- to C-terminus: Polyamine aminopropyltransferase (286 aa).

Residues Thr-5–Asn-238 form the PABS domain. Gln-33 contacts S-methyl-5'-thioadenosine. Residues His-64 and Asp-88 each coordinate spermidine. S-methyl-5'-thioadenosine contacts are provided by residues Glu-108 and Asp-140–Gly-141. The active-site Proton acceptor is Asp-158. Spermidine is bound at residue Asp-158–Asp-161. An S-methyl-5'-thioadenosine-binding site is contributed by Pro-165.

Belongs to the spermidine/spermine synthase family. Homodimer or homotetramer.

The protein resides in the cytoplasm. It carries out the reaction S-adenosyl 3-(methylsulfanyl)propylamine + putrescine = S-methyl-5'-thioadenosine + spermidine + H(+). It functions in the pathway amine and polyamine biosynthesis; spermidine biosynthesis; spermidine from putrescine: step 1/1. Its function is as follows. Catalyzes the irreversible transfer of a propylamine group from the amino donor S-adenosylmethioninamine (decarboxy-AdoMet) to putrescine (1,4-diaminobutane) to yield spermidine. The sequence is that of Polyamine aminopropyltransferase from Salmonella paratyphi B (strain ATCC BAA-1250 / SPB7).